The sequence spans 325 residues: MFTSVKKFFGIHEESDEILYNQLISLLEKLTRVITAKDSDKKEVEKLIDKIKNTNLFNQSDENGNTTLILAADAGLEEACLKLIPKMSDEAINMIENIRGQPALVKAMWRDLDSVCIELIPKMSKENINAIDNCGRTLLMLAAKKGMTTVSKMFINLMPPEMIIHADNEGNTTASYADTDHAFADTTKTIKLLQEKLLKSLASFINKSFLKKDHVKKGVDNFFKIVWATKFYKKIKVNKELLASYLQEQNNDPESTNTPESMIKTMNNFIKLHLFAIAGVCKIIQPAFETSSLHLSCLPKEAICCIISHLENEKWGVDAVLLGEN.

ANK repeat units lie at residues 63-94 (NGNTTLILAADAGLEEACLKLIPKMSDEAINM), 99-130 (RGQPALVKAMWRDLDSVCIELIPKMSKENINA), and 134-164 (CGRTLLMLAAKKGMTTVSKMFINLMPPEMII).

In Rickettsia felis (strain ATCC VR-1525 / URRWXCal2) (Rickettsia azadi), this protein is Putative ankyrin repeat protein RF_0011.